The primary structure comprises 1073 residues: Carbamoyl phosphate synthase large chain (1073 aa).

The carboxyphosphate synthetic domain stretch occupies residues 2 to 403 (PKRTDIKSIL…SLQKALRGLE (402 aa)). ATP contacts are provided by Arg129, Arg169, Gly175, Gly176, Glu208, Leu210, Glu215, Gly241, Ile242, His243, Gln285, and Glu299. The ATP-grasp 1 domain maps to 133-328 (DVAMKKIGLE…IAKVAAKLAV (196 aa)). 3 residues coordinate Mg(2+): Gln285, Glu299, and Asn301. Positions 285, 299, and 301 each coordinate Mn(2+). An oligomerization domain region spans residues 404-553 (VGATGFDPKV…YSTYEEECEA (150 aa)). Residues 554–936 (NPSTDREKIM…AFAKAQLGSN (383 aa)) are carbamoyl phosphate synthetic domain. An ATP-grasp 2 domain is found at 679-870 (QHAVERLKLK…LAKVAARVMA (192 aa)). ATP-binding residues include Arg715, His754, Leu756, Glu761, Gly786, Val787, His788, Ser789, Gln829, and Glu841. Gln829, Glu841, and Asn843 together coordinate Mg(2+). Mn(2+) contacts are provided by Gln829, Glu841, and Asn843. Positions 937–1073 (STMKKHGRAL…SVQEMHAQIK (137 aa)) constitute an MGS-like domain. Positions 937–1073 (STMKKHGRAL…SVQEMHAQIK (137 aa)) are allosteric domain.

The protein belongs to the CarB family. As to quaternary structure, composed of two chains; the small (or glutamine) chain promotes the hydrolysis of glutamine to ammonia, which is used by the large (or ammonia) chain to synthesize carbamoyl phosphate. Tetramer of heterodimers (alpha,beta)4. Requires Mg(2+) as cofactor. It depends on Mn(2+) as a cofactor.

It carries out the reaction hydrogencarbonate + L-glutamine + 2 ATP + H2O = carbamoyl phosphate + L-glutamate + 2 ADP + phosphate + 2 H(+). The catalysed reaction is hydrogencarbonate + NH4(+) + 2 ATP = carbamoyl phosphate + 2 ADP + phosphate + 2 H(+). The protein operates within amino-acid biosynthesis; L-arginine biosynthesis; carbamoyl phosphate from bicarbonate: step 1/1. It functions in the pathway pyrimidine metabolism; UMP biosynthesis via de novo pathway; (S)-dihydroorotate from bicarbonate: step 1/3. In terms of biological role, large subunit of the glutamine-dependent carbamoyl phosphate synthetase (CPSase). CPSase catalyzes the formation of carbamoyl phosphate from the ammonia moiety of glutamine, carbonate, and phosphate donated by ATP, constituting the first step of 2 biosynthetic pathways, one leading to arginine and/or urea and the other to pyrimidine nucleotides. The large subunit (synthetase) binds the substrates ammonia (free or transferred from glutamine from the small subunit), hydrogencarbonate and ATP and carries out an ATP-coupled ligase reaction, activating hydrogencarbonate by forming carboxy phosphate which reacts with ammonia to form carbamoyl phosphate. The polypeptide is Carbamoyl phosphate synthase large chain (Escherichia coli O6:H1 (strain CFT073 / ATCC 700928 / UPEC)).